Reading from the N-terminus, the 396-residue chain is Elongation factor Tu (396 aa).

Residues 10–206 (KEHVNIGTIG…AVDTWIETPV (197 aa)) enclose the tr-type G domain. The segment at 19–26 (GHVDHGKT) is G1. 19 to 26 (GHVDHGKT) contributes to the GTP binding site. Thr26 is a Mg(2+) binding site. The segment at 60 to 64 (GITIN) is G2. Positions 81–84 (DCPG) are G3. GTP contacts are provided by residues 81-85 (DCPGH) and 136-139 (NKCD). The G4 stretch occupies residues 136–139 (NKCD). A G5 region spans residues 176–178 (SAL).

It belongs to the TRAFAC class translation factor GTPase superfamily. Classic translation factor GTPase family. EF-Tu/EF-1A subfamily. In terms of assembly, monomer.

The protein resides in the cytoplasm. It catalyses the reaction GTP + H2O = GDP + phosphate + H(+). In terms of biological role, GTP hydrolase that promotes the GTP-dependent binding of aminoacyl-tRNA to the A-site of ribosomes during protein biosynthesis. This is Elongation factor Tu from Mycoplasmopsis agalactiae (strain NCTC 10123 / CIP 59.7 / PG2) (Mycoplasma agalactiae).